The sequence spans 804 residues: Ribonucleoside-diphosphate reductase large subunit-like protein (804 aa).

Belongs to the ribonucleoside diphosphate reductase large chain family.

It is found in the virion. The protein localises to the host cytoplasm. Does not possess a ribonucleotide reductase activity. Betaherpesviruses probably use another strategy to expand the dNTP pool in a quiescent host cell. This chain is Ribonucleoside-diphosphate reductase large subunit-like protein, found in Homo sapiens (Human).